The chain runs to 1560 residues: Lysine-specific demethylase 5C (1560 aa).

The JmjN domain maps to 14 to 55 (CPVFEPSWAEFRDPLGYIAKIRPIAEKSGICKIRPPADWQPP). An ARID domain is found at 79–169 (TRVKLNYLDQ…IVYPYEMYQS (91 aa)). Residues 197-207 (LRQSVQPSKFN) show a composition bias toward polar residues. Residues 197–227 (LRQSVQPSKFNSYGRRAKRLQPDPEPTEEDI) form a disordered region. Residues lysine 205, lysine 229, lysine 244, and lysine 274 each participate in a glycyl lysine isopeptide (Lys-Gly) (interchain with G-Cter in SUMO2) cross-link. Serine 287 bears the Phosphoserine mark. Lysine 295 participates in a covalent cross-link: Glycyl lysine isopeptide (Lys-Gly) (interchain with G-Cter in SUMO2). Residues serine 301 and serine 317 each carry the phosphoserine modification. The PHD-type 1 zinc finger occupies 326–372 (VCRMCSRGDEDDKLLLCDGCDDNYHIFCLLPPLPEIPKGVWRCPKCV). Tyrosine 440 provides a ligand contact to 2-oxoglutarate. The JmjC domain maps to 468 to 634 (EYATSGWNLN…AGRQCIEHYR (167 aa)). 2 residues coordinate Fe cation: histidine 514 and glutamate 516. Residues serine 522, asparagine 524, and lysine 532 each contribute to the 2-oxoglutarate site. Histidine 602 contributes to the Fe cation binding site. Residues 707 to 759 (CIKCKTTCFLSALACYDCPDGLVCLSHINDLCKCSSSRQYLRYRYTLDELPAM) form a C5HC2 zinc finger. Phosphoserine occurs at positions 893 and 897. Lysine 1127 participates in a covalent cross-link: Glycyl lysine isopeptide (Lys-Gly) (interchain with G-Cter in SUMO2). The tract at residues 1161–1181 (ILQLRRTNSAKPSPLASSSTA) is disordered. Residues 1169–1181 (SAKPSPLASSSTA) are compositionally biased toward low complexity. A PHD-type 2 zinc finger spans residues 1187–1248 (ICVCGQVLAG…DTKFLCPLCM (62 aa)). Disordered regions lie at residues 1316-1371 (QAEP…GSGK) and 1444-1560 (ERHG…QQQL). Positions 1335–1345 (PLREGSGKDMP) are enriched in basic and acidic residues. Position 1359 is a phosphoserine (serine 1359). The span at 1448 to 1463 (SRARGRALERRRRRKV) shows a compositional bias: basic residues. Over residues 1464–1481 (DRGGEGDDPAREELEPKR) the composition is skewed to basic and acidic residues. Positions 1488–1503 (EAEEVQEEEELEEETG) are enriched in acidic residues. Over residues 1516-1544 (SPSTQENQNGLEPAEGTTSGPSAPFSTLT) the composition is skewed to polar residues.

The protein belongs to the JARID1 histone demethylase family. As to quaternary structure, part of two distinct complexes, one containing E2F6, and the other containing REST. Interacts with ZMYND8. It depends on Fe(2+) as a cofactor. In terms of tissue distribution, expressed in all tissues examined. Highest levels found in brain and skeletal muscle.

Its subcellular location is the nucleus. It catalyses the reaction N(6),N(6),N(6)-trimethyl-L-lysyl(4)-[histone H3] + 3 2-oxoglutarate + 3 O2 = L-lysyl(4)-[histone H3] + 3 formaldehyde + 3 succinate + 3 CO2. The inhibitor KDOAM-25 and others inhibit its demethylase activity, resulting to cell cycle arrest in myeloma cells. Its function is as follows. Histone demethylase that specifically demethylates 'Lys-4' of histone H3, thereby playing a central role in histone code. Does not demethylate histone H3 'Lys-9', H3 'Lys-27', H3 'Lys-36', H3 'Lys-79' or H4 'Lys-20'. Demethylates trimethylated and dimethylated but not monomethylated H3 'Lys-4'. Participates in transcriptional repression of neuronal genes by recruiting histone deacetylases and REST at neuron-restrictive silencer elements. Represses the CLOCK-BMAL1 heterodimer-mediated transcriptional activation of the core clock component PER2. The sequence is that of Lysine-specific demethylase 5C from Homo sapiens (Human).